The sequence spans 310 residues: tRNA-cytidine(32) 2-sulfurtransferase (310 aa).

A PP-loop motif motif is present at residues 45 to 50 (SGGKDS). Residues cysteine 120, cysteine 123, and cysteine 211 each contribute to the [4Fe-4S] cluster site.

Belongs to the TtcA family. In terms of assembly, homodimer. It depends on Mg(2+) as a cofactor. [4Fe-4S] cluster serves as cofactor.

Its subcellular location is the cytoplasm. It carries out the reaction cytidine(32) in tRNA + S-sulfanyl-L-cysteinyl-[cysteine desulfurase] + AH2 + ATP = 2-thiocytidine(32) in tRNA + L-cysteinyl-[cysteine desulfurase] + A + AMP + diphosphate + H(+). Its pathway is tRNA modification. Functionally, catalyzes the ATP-dependent 2-thiolation of cytidine in position 32 of tRNA, to form 2-thiocytidine (s(2)C32). The sulfur atoms are provided by the cysteine/cysteine desulfurase (IscS) system. This is tRNA-cytidine(32) 2-sulfurtransferase from Shewanella putrefaciens (strain CN-32 / ATCC BAA-453).